A 216-amino-acid chain; its full sequence is Large ribosomal subunit protein uL3 (216 aa).

Positions 137 to 158 (GASHGAHKNHRKPGSIGGASTP) are disordered.

It belongs to the universal ribosomal protein uL3 family. As to quaternary structure, part of the 50S ribosomal subunit. Forms a cluster with proteins L14 and L19.

One of the primary rRNA binding proteins, it binds directly near the 3'-end of the 23S rRNA, where it nucleates assembly of the 50S subunit. This Arthrobacter sp. (strain FB24) protein is Large ribosomal subunit protein uL3.